A 230-amino-acid polypeptide reads, in one-letter code: 3,4-dihydroxy-2-butanone 4-phosphate synthase (230 aa).

D-ribulose 5-phosphate contacts are provided by residues 42-43 (RE), D47, 155-159 (RRGHT), and E179. Residue E43 coordinates Mg(2+). H158 serves as a coordination point for Mg(2+).

Belongs to the DHBP synthase family. Homodimer. Mg(2+) serves as cofactor. Mn(2+) is required as a cofactor.

It carries out the reaction D-ribulose 5-phosphate = (2S)-2-hydroxy-3-oxobutyl phosphate + formate + H(+). Its pathway is cofactor biosynthesis; riboflavin biosynthesis; 2-hydroxy-3-oxobutyl phosphate from D-ribulose 5-phosphate: step 1/1. In terms of biological role, catalyzes the conversion of D-ribulose 5-phosphate to formate and 3,4-dihydroxy-2-butanone 4-phosphate. The sequence is that of 3,4-dihydroxy-2-butanone 4-phosphate synthase from Bordetella bronchiseptica (strain ATCC BAA-588 / NCTC 13252 / RB50) (Alcaligenes bronchisepticus).